The following is a 336-amino-acid chain: MLEARDLYCERDERTLFRGLSFTVDAGEWVQVTGGNGAGKTTLLRLLTGLARPDGGEVYWQGEPLRRVRDSFHRSLLWIGHQPGIKTRLTARENLHFFHPGDGARLPEALAQAGLAGFEDVPVARLSAGQQRRVALARLWLTRAALWVLDEPFTAIDVNGVARLTRRMAAHTAQGGMVILTTHQPLPGAADTVRRLALTTALVLYALRANIDLFYTPGEILYGKRETQQLPAVGQRLRVGGMVMPGSVRRDPDSLKVNFSLYDAEGSVTVSYEGILPDLFREGQGVVVQGTLEKGNHVLAHEVLAKHDENYTPPEVEKAMQENHRRPQRVDKDTSS.

Positions 1–199 (MLEARDLYCE…ADTVRRLALT (199 aa)) are cytochrome c biogenesis ATP-binding export protein CcmA 2. In terms of domain architecture, ABC transporter spans 2 to 242 (LEARDLYCER…VGQRLRVGGM (241 aa)). 34–41 (GGNGAGKT) is an ATP binding site. Positions 196-336 (LALTTALVLY…PQRVDKDTSS (141 aa)) are cytochrome c-type biogenesis protein CcmE 2. Histidine 307 and tyrosine 311 together coordinate heme. The tract at residues 307 to 336 (HDENYTPPEVEKAMQENHRRPQRVDKDTSS) is disordered.

It in the N-terminal section; belongs to the ABC transporter superfamily. CcmA exporter (TC 3.A.1.107) family. The protein in the C-terminal section; belongs to the CcmE/CycJ family.

Its subcellular location is the cell inner membrane. The catalysed reaction is heme b(in) + ATP + H2O = heme b(out) + ADP + phosphate + H(+). In terms of biological role, part of the ABC transporter complex CcmAB involved in the biogenesis of c-type cytochromes; once thought to export heme, this seems not to be the case, but its exact role is uncertain. Responsible for energy coupling to the transport system. Functionally, heme chaperone required for the biogenesis of c-type cytochromes. Transiently binds heme delivered by CcmC and transfers the heme to apo-cytochromes in a process facilitated by CcmF and CcmH. The chain is Putative bifunctional cytochrome c-type biogenesis protein CcmAE (ccmAE) from Salmonella choleraesuis (strain SC-B67).